The sequence spans 133 residues: Large ribosomal subunit protein eL32y (133 aa).

The protein belongs to the eukaryotic ribosomal protein eL32 family.

This chain is Large ribosomal subunit protein eL32y (RPL32B), found in Arabidopsis thaliana (Mouse-ear cress).